The following is a 204-amino-acid chain: Leucyl/phenylalanyl-tRNA--protein transferase (204 aa).

This sequence belongs to the L/F-transferase family.

The protein localises to the cytoplasm. The catalysed reaction is N-terminal L-lysyl-[protein] + L-leucyl-tRNA(Leu) = N-terminal L-leucyl-L-lysyl-[protein] + tRNA(Leu) + H(+). The enzyme catalyses N-terminal L-arginyl-[protein] + L-leucyl-tRNA(Leu) = N-terminal L-leucyl-L-arginyl-[protein] + tRNA(Leu) + H(+). It carries out the reaction L-phenylalanyl-tRNA(Phe) + an N-terminal L-alpha-aminoacyl-[protein] = an N-terminal L-phenylalanyl-L-alpha-aminoacyl-[protein] + tRNA(Phe). Its function is as follows. Functions in the N-end rule pathway of protein degradation where it conjugates Leu, Phe and, less efficiently, Met from aminoacyl-tRNAs to the N-termini of proteins containing an N-terminal arginine or lysine. The polypeptide is Leucyl/phenylalanyl-tRNA--protein transferase (Rhizobium johnstonii (strain DSM 114642 / LMG 32736 / 3841) (Rhizobium leguminosarum bv. viciae)).